The chain runs to 521 residues: Probable xyloglucan galactosyltransferase GT14 (521 aa).

The Cytoplasmic portion of the chain corresponds to Met1–Asn30. The helical; Signal-anchor for type II membrane protein transmembrane segment at Val31 to Ser51 threads the bilayer. At Ala52–Ala521 the chain is on the lumenal side. The disordered stretch occupies residues Thr72 to Asp92. Residues Phe76 to Asp87 show a composition bias toward basic and acidic residues. Residues Asn81, Asn177, Asn203, Asn249, Asn265, and Asn411 are each glycosylated (N-linked (GlcNAc...) asparagine). The tract at residues Arg492–Ala521 is disordered.

The protein belongs to the glycosyltransferase 47 family. In terms of tissue distribution, expressed in roots, hypocotyls, cotyledons, leaves, stems, stamens and carpels.

Its subcellular location is the golgi apparatus membrane. Functions in xyloglucan synthesis by adding side chains to the xylosylated glucan backbone. Involved in the galactosylation of hemicellulose xyloglucan. The chain is Probable xyloglucan galactosyltransferase GT14 from Arabidopsis thaliana (Mouse-ear cress).